Consider the following 443-residue polypeptide: Putative F-box/FBD/LRR-repeat protein At5g22670 (443 aa).

An F-box domain is found at 10–56 (QDSISLLPDDLLCRILSNLPTKVAVRTSVLSKRWKRFSLSVPLLEFN). 5 LRR repeats span residues 139–165 (SLRL…HLID), 166–191 (NIYP…NVSR), 219–243 (YGDI…SLRD), 275–300 (NFLL…TMSG), and 325–353 (YAVF…VLEL). In terms of domain architecture, FBD spans 361–412 (LLILSSSIPKCLRSSLEHVEIHTPISGAEAEMKLVKYFLENSAVLKKFTLQL).

In Arabidopsis thaliana (Mouse-ear cress), this protein is Putative F-box/FBD/LRR-repeat protein At5g22670.